A 359-amino-acid chain; its full sequence is DNA integrity scanning protein DisA (359 aa).

One can recognise a DAC domain in the interval 7–146 (DDIFRATLAA…GRRYVLDGSA (140 aa)). Residues Gly-74, Leu-92, and 105 to 109 (TRHRT) contribute to the ATP site.

It belongs to the DisA family. In terms of assembly, homooctamer. Mg(2+) serves as cofactor.

It carries out the reaction 2 ATP = 3',3'-c-di-AMP + 2 diphosphate. Its function is as follows. Participates in a DNA-damage check-point that is active prior to asymmetric division when DNA is damaged. DisA forms globular foci that rapidly scan along the chromosomes during sporulation, searching for lesions. When a lesion is present, DisA pauses at the lesion site. This triggers a cellular response that culminates in a temporary block in sporulation initiation. Also has diadenylate cyclase activity, catalyzing the condensation of 2 ATP molecules into cyclic di-AMP (c-di-AMP). c-di-AMP acts as a signaling molecule that couples DNA integrity with progression of sporulation. The rise in c-di-AMP level generated by DisA while scanning the chromosome, operates as a positive signal that advances sporulation; upon encountering a lesion, the DisA focus arrests at the damaged site and halts c-di-AMP synthesis. The sequence is that of DNA integrity scanning protein DisA from Frankia casuarinae (strain DSM 45818 / CECT 9043 / HFP020203 / CcI3).